Consider the following 160-residue polypeptide: SsrA-binding protein (160 aa).

The segment at 136-160 (KRDTMRERDSNRELQRAVRNKGKED) is disordered.

Belongs to the SmpB family.

The protein localises to the cytoplasm. Required for rescue of stalled ribosomes mediated by trans-translation. Binds to transfer-messenger RNA (tmRNA), required for stable association of tmRNA with ribosomes. tmRNA and SmpB together mimic tRNA shape, replacing the anticodon stem-loop with SmpB. tmRNA is encoded by the ssrA gene; the 2 termini fold to resemble tRNA(Ala) and it encodes a 'tag peptide', a short internal open reading frame. During trans-translation Ala-aminoacylated tmRNA acts like a tRNA, entering the A-site of stalled ribosomes, displacing the stalled mRNA. The ribosome then switches to translate the ORF on the tmRNA; the nascent peptide is terminated with the 'tag peptide' encoded by the tmRNA and targeted for degradation. The ribosome is freed to recommence translation, which seems to be the essential function of trans-translation. This chain is SsrA-binding protein, found in Pseudomonas putida (strain GB-1).